Consider the following 490-residue polypeptide: 7-ethoxycoumarin O-deethylase (490 aa).

Cys-432 serves as a coordination point for heme.

Belongs to the cytochrome P450 family. Heme serves as cofactor.

Capable of dealkylating a model xenobiotic compound, 7-ethoxycoumarin. Metabolizes with high efficiency a wide range of xenobiotics, including alkoxycoumarins, alkoxyresorufins, and several herbicides of the class of phenylureas. Catalyzes the double N-dealkylation (oxidative N-demethylation) of phenylureas such as chlortoluron and isoproturon with turnover rates comparable to those reported for physiological substrates and produces non-phytotoxic compounds. Could be used for control of herbicide tolerance and selectivity, as well as soil and groundwater bioremediation. The protein is 7-ethoxycoumarin O-deethylase (CYP76B1) of Helianthus tuberosus (Jerusalem artichoke).